We begin with the raw amino-acid sequence, 476 residues long: Cysteine--tRNA ligase (476 aa).

C28 serves as a coordination point for Zn(2+). The short motif at 30 to 40 (PTVYDHTHLGH) is the 'HIGH' region element. C208, H233, and E237 together coordinate Zn(2+). Positions 265–269 (KMSKS) match the 'KMSKS' region motif. K268 contributes to the ATP binding site.

It belongs to the class-I aminoacyl-tRNA synthetase family. Zn(2+) is required as a cofactor.

The protein localises to the cytoplasm. The catalysed reaction is tRNA(Cys) + L-cysteine + ATP = L-cysteinyl-tRNA(Cys) + AMP + diphosphate. The chain is Cysteine--tRNA ligase from Methanococcus maripaludis (strain C6 / ATCC BAA-1332).